Consider the following 129-residue polypeptide: Small ribosomal subunit protein uS12 (129 aa).

Positions 1–25 (MPTYNQLVRFGRKSKTRKTKSPALE) are disordered. A compositionally biased stretch (basic residues) spans 10-20 (FGRKSKTRKTK). At aspartate 89 the chain carries 3-methylthioaspartic acid. A disordered region spans residues 110 to 129 (RKQGRSRYGAPSKQVAVTKK).

This sequence belongs to the universal ribosomal protein uS12 family. As to quaternary structure, part of the 30S ribosomal subunit. Contacts proteins S8 and S17. May interact with IF1 in the 30S initiation complex.

Functionally, with S4 and S5 plays an important role in translational accuracy. In terms of biological role, interacts with and stabilizes bases of the 16S rRNA that are involved in tRNA selection in the A site and with the mRNA backbone. Located at the interface of the 30S and 50S subunits, it traverses the body of the 30S subunit contacting proteins on the other side and probably holding the rRNA structure together. The combined cluster of proteins S8, S12 and S17 appears to hold together the shoulder and platform of the 30S subunit. In Rickettsia canadensis (strain McKiel), this protein is Small ribosomal subunit protein uS12.